Consider the following 95-residue polypeptide: Bacterial microcompartment shell protein EutM (95 aa).

A BMC domain is found at 6–90 (ALGMIETKGL…PHFEVDAILP (85 aa)).

The protein belongs to the bacterial microcompartments protein family. Homohexamer; has a positively charged pore 9 Angstroms in diameter. The hexamers pack into a two-dimensional array. May interact with EutQ.

It is found in the bacterial microcompartment. It participates in amine and polyamine degradation; ethanolamine degradation. Its function is as follows. A component of the bacterial microcompartment (BMC) shell dedicated to ethanolamine degradation. Each homohexamer has a central pore with an opening of up to 9.0 Angstroms. Expression of the eut operon may allow this bacteria to use ethanolamine as a carbon, nitrogen and energy source. The pore probably allows metabolite passage into and out of the BMC. In Clostridioides difficile (strain 630) (Peptoclostridium difficile), this protein is Bacterial microcompartment shell protein EutM.